Reading from the N-terminus, the 459-residue chain is METYDIAIIGTGSGNSILDERYASKRAAICEQGTFGGTCLNVGCIPTKMFVYAAEVAKTIRGASRYGIDAHIDRVRWDDVVSRVFGRIDPIALSGEDYRRCAPNIDVYRTHTRFGPVQADGRYLLRTDAGEEFTAEQVVIAAGSRPVIPPAILASGVDYHTSDTVMRIAELPEHIVIVGSGFIAAEFAHVFSALGVRVTLVIRGSCLLRHCDDTICERFTRIASTKWELRTHRNVVDGQQRGSGVALRLDDGCTINADLLLVATGRVSNADLLDAEQAGVDVEDGRVIVDEYQRTSARGVFALGDVSSPYLLKHVANHEARVVQHNLLCDWEDTQSMIVTDHRYVPAAVFTDPQIAAVGLTENQAVAKGLDISVKIQDYGDVAYGWAMEDTSGIVKLITERGSGRLLGAHIMGYQASSLIQPLIQAMSFGLTAAEMARGQYWIHPALPEVVENALLGLR.

31 to 39 (EQGTFGGTC) is a binding site for FAD. The cysteines at positions 39 and 44 are disulfide-linked. His-444 acts as the Proton acceptor in catalysis.

It belongs to the class-I pyridine nucleotide-disulfide oxidoreductase family. As to quaternary structure, homodimer. FAD is required as a cofactor.

It catalyses the reaction 2 mycothiol + NADP(+) = mycothione + NADPH + H(+). It carries out the reaction 2 mycothiol + NAD(+) = mycothione + NADH + H(+). Catalyzes the NAD(P)H-dependent reduction of mycothione (the oxidized disulfide form of mycothiol) to mycothiol. This Mycobacterium tuberculosis (strain CDC 1551 / Oshkosh) protein is Mycothione reductase (mtr).